The chain runs to 258 residues: Thiazole synthase (258 aa).

The Schiff-base intermediate with DXP role is filled by lysine 96. Residues glycine 157, 183-184 (AG), and 205-206 (NT) contribute to the 1-deoxy-D-xylulose 5-phosphate site.

It belongs to the ThiG family. Homotetramer. Forms heterodimers with either ThiH or ThiS.

It localises to the cytoplasm. It catalyses the reaction [ThiS sulfur-carrier protein]-C-terminal-Gly-aminoethanethioate + 2-iminoacetate + 1-deoxy-D-xylulose 5-phosphate = [ThiS sulfur-carrier protein]-C-terminal Gly-Gly + 2-[(2R,5Z)-2-carboxy-4-methylthiazol-5(2H)-ylidene]ethyl phosphate + 2 H2O + H(+). Its pathway is cofactor biosynthesis; thiamine diphosphate biosynthesis. Catalyzes the rearrangement of 1-deoxy-D-xylulose 5-phosphate (DXP) to produce the thiazole phosphate moiety of thiamine. Sulfur is provided by the thiocarboxylate moiety of the carrier protein ThiS. In vitro, sulfur can be provided by H(2)S. In Alkaliphilus metalliredigens (strain QYMF), this protein is Thiazole synthase.